The following is a 141-amino-acid chain: uncharacterized protein (141 aa).

This is an uncharacterized protein from Escherichia coli (strain K12).